Reading from the N-terminus, the 92-residue chain is Small ribosomal subunit protein uS19 (92 aa).

The protein belongs to the universal ribosomal protein uS19 family.

In terms of biological role, protein S19 forms a complex with S13 that binds strongly to the 16S ribosomal RNA. The sequence is that of Small ribosomal subunit protein uS19 from Chelativorans sp. (strain BNC1).